The following is a 1465-amino-acid chain: DNA polymerase III PolC-type (1465 aa).

The region spanning 427-583 (YVVFDVETTG…YDAEATGRLL (157 aa)) is the Exonuclease domain.

Belongs to the DNA polymerase type-C family. PolC subfamily.

It is found in the cytoplasm. The catalysed reaction is DNA(n) + a 2'-deoxyribonucleoside 5'-triphosphate = DNA(n+1) + diphosphate. In terms of biological role, required for replicative DNA synthesis. This DNA polymerase also exhibits 3' to 5' exonuclease activity. The protein is DNA polymerase III PolC-type of Streptococcus pyogenes serotype M6 (strain ATCC BAA-946 / MGAS10394).